A 178-amino-acid chain; its full sequence is Large ribosomal subunit protein uL5 (178 aa).

This sequence belongs to the universal ribosomal protein uL5 family. In terms of assembly, part of the 50S ribosomal subunit; part of the 5S rRNA/L5/L18/L25 subcomplex. Contacts the 5S rRNA and the P site tRNA. Forms a bridge to the 30S subunit in the 70S ribosome.

This is one of the proteins that bind and probably mediate the attachment of the 5S RNA into the large ribosomal subunit, where it forms part of the central protuberance. In the 70S ribosome it contacts protein S13 of the 30S subunit (bridge B1b), connecting the 2 subunits; this bridge is implicated in subunit movement. Contacts the P site tRNA; the 5S rRNA and some of its associated proteins might help stabilize positioning of ribosome-bound tRNAs. This Prochlorococcus marinus subsp. pastoris (strain CCMP1986 / NIES-2087 / MED4) protein is Large ribosomal subunit protein uL5.